The chain runs to 37 residues: Beta-2-microglobulin (37 aa).

Positions G11–E37 constitute an Ig-like C1-type domain.

The protein belongs to the beta-2-microglobulin family. In terms of assembly, heterodimer of an alpha chain and a beta chain. Beta-2-microglobulin is the beta-chain of major histocompatibility complex class I molecules.

It localises to the secreted. Functionally, component of the class I major histocompatibility complex (MHC). Involved in the presentation of peptide antigens to the immune system. In Oreochromis niloticus (Nile tilapia), this protein is Beta-2-microglobulin (b2m).